Consider the following 353-residue polypeptide: Histidinol-phosphate aminotransferase (353 aa).

Lys-211 is subject to N6-(pyridoxal phosphate)lysine.

It belongs to the class-II pyridoxal-phosphate-dependent aminotransferase family. Histidinol-phosphate aminotransferase subfamily. As to quaternary structure, homodimer. Pyridoxal 5'-phosphate serves as cofactor.

It carries out the reaction L-histidinol phosphate + 2-oxoglutarate = 3-(imidazol-4-yl)-2-oxopropyl phosphate + L-glutamate. It participates in amino-acid biosynthesis; L-histidine biosynthesis; L-histidine from 5-phospho-alpha-D-ribose 1-diphosphate: step 7/9. This Marinomonas sp. (strain MWYL1) protein is Histidinol-phosphate aminotransferase.